Consider the following 415-residue polypeptide: Probable G-protein coupled receptor 19 (415 aa).

Residues 1–69 (MVFAHRMDND…LNPGEVATAS (69 aa)) are Extracellular-facing. 2 N-linked (GlcNAc...) asparagine glycosylation sites follow: Asn25 and Asn52. The chain crosses the membrane as a helical span at residues 70–90 (IFFGALWLFSIFGNSLVCLVI). Over 91–102 (HRSRRTQSTTNY) the chain is Cytoplasmic. Residues 103 to 123 (FVVSMACADLLISVASTPFVV) form a helical membrane-spanning segment. The Extracellular portion of the chain corresponds to 124–152 (LQFTTGRWTLGSAMCKVVRYFQYLTPGVQ). Cys138 and Cys210 are joined by a disulfide. Residues 153–173 (IYVLLSICIDRFYTIVYPLSF) form a helical membrane-spanning segment. Residues 174–182 (KVSREKAKK) lie on the Cytoplasmic side of the membrane. The chain crosses the membrane as a helical span at residues 183-203 (MIAASWILDAAFVTPVFFFYG). Residues 204 to 221 (SNWDSHCNYFLPPSWEGT) lie on the Extracellular side of the membrane. The chain crosses the membrane as a helical span at residues 222 to 242 (AYTVIHFLVGFVIPSILIILF). Residues 243–277 (YQKVIKYIWRIGTDGRTLRRTMNIVPRTKVKTVKM) are Cytoplasmic-facing. The chain crosses the membrane as a helical span at residues 278-298 (FLLLNLVFLFSWLPFHVAQLW). The Extracellular segment spans residues 299–309 (HPHEQDYKKSS). The helical transmembrane segment at 310–332 (LVFTAVTWVSFSSSASKPTLYSI) threads the bilayer. The Cytoplasmic portion of the chain corresponds to 333–415 (YNANFRRGMK…INSNPPNTFV (83 aa)).

The protein belongs to the G-protein coupled receptor 1 family. Strongly expressed in the brain.

It is found in the cell membrane. In terms of biological role, G-protein coupled receptor that plays a role in the regulation of circadian rhythms and energy metabolism. Participates in maintaining proper circadian gene expression in the suprachiasmatic nucleus (SCN), the locus of the master circadian clock in the brain. May function as a coordinator of aging-associated metabolic dysfunction, stress response, DNA integrity management, and eventual senescence. Upon binding to adropin, modulates mitochondrial energy metabolism via the p44/42-PDK4 signaling pathway, influencing pyruvate dehydrogenase activity. The polypeptide is Probable G-protein coupled receptor 19 (Gpr19) (Mus musculus (Mouse)).